Consider the following 254-residue polypeptide: Flavin-dependent thymidylate synthase (254 aa).

The region spanning 7–237 (LRVQLIARTE…PAVFADFEIY (231 aa)) is the ThyX domain. FAD is bound by residues Ser71, 95–97 (RHR), and Gln103. Residues 92–95 (ELIR), 103–107 (QLSQR), and Arg176 each bind dUMP. Residues 95-105 (RHRHFSYSQLS) carry the ThyX motif motif. Residues 192–194 (NYR) and His198 each bind FAD. A dUMP-binding site is contributed by Arg203. The active-site Involved in ionization of N3 of dUMP, leading to its activation is Arg203.

It belongs to the thymidylate synthase ThyX family. As to quaternary structure, homotetramer. FAD serves as cofactor.

The catalysed reaction is dUMP + (6R)-5,10-methylene-5,6,7,8-tetrahydrofolate + NADPH + H(+) = dTMP + (6S)-5,6,7,8-tetrahydrofolate + NADP(+). It participates in pyrimidine metabolism; dTTP biosynthesis. In terms of biological role, catalyzes the reductive methylation of 2'-deoxyuridine-5'-monophosphate (dUMP) to 2'-deoxythymidine-5'-monophosphate (dTMP) while utilizing 5,10-methylenetetrahydrofolate (mTHF) as the methyl donor, and NADPH and FADH(2) as the reductant. The protein is Flavin-dependent thymidylate synthase of Mycobacterium sp. (strain JLS).